Reading from the N-terminus, the 401-residue chain is Nicotinate phosphoribosyltransferase (401 aa).

At His-221 the chain carries Phosphohistidine; by autocatalysis.

Belongs to the NAPRTase family. Transiently phosphorylated on a His residue during the reaction cycle. Phosphorylation strongly increases the affinity for substrates and increases the rate of nicotinate D-ribonucleotide production. Dephosphorylation regenerates the low-affinity form of the enzyme, leading to product release.

The enzyme catalyses nicotinate + 5-phospho-alpha-D-ribose 1-diphosphate + ATP + H2O = nicotinate beta-D-ribonucleotide + ADP + phosphate + diphosphate. It participates in cofactor biosynthesis; NAD(+) biosynthesis; nicotinate D-ribonucleotide from nicotinate: step 1/1. Functionally, catalyzes the synthesis of beta-nicotinate D-ribonucleotide from nicotinate and 5-phospho-D-ribose 1-phosphate at the expense of ATP. This Yersinia pseudotuberculosis serotype O:1b (strain IP 31758) protein is Nicotinate phosphoribosyltransferase.